The following is a 425-amino-acid chain: 3-isopropylmalate dehydratase large subunit (425 aa).

Residues Cys306, Cys366, and Cys369 each contribute to the [4Fe-4S] cluster site.

Belongs to the aconitase/IPM isomerase family. LeuC type 2 subfamily. As to quaternary structure, heterodimer of LeuC and LeuD. The cofactor is [4Fe-4S] cluster.

The catalysed reaction is (2R,3S)-3-isopropylmalate = (2S)-2-isopropylmalate. It participates in amino-acid biosynthesis; L-leucine biosynthesis; L-leucine from 3-methyl-2-oxobutanoate: step 2/4. Catalyzes the isomerization between 2-isopropylmalate and 3-isopropylmalate, via the formation of 2-isopropylmaleate. The chain is 3-isopropylmalate dehydratase large subunit from Nautilia profundicola (strain ATCC BAA-1463 / DSM 18972 / AmH).